The sequence spans 156 residues: Ribonuclease H (156 aa).

Positions 3 to 144 (ELKQIRIYTD…CDTLAREAAE (142 aa)) constitute an RNase H type-1 domain. Positions 12, 50, 72, and 136 each coordinate Mg(2+).

The protein belongs to the RNase H family. In terms of assembly, monomer. Mg(2+) is required as a cofactor.

It localises to the cytoplasm. It carries out the reaction Endonucleolytic cleavage to 5'-phosphomonoester.. In terms of biological role, endonuclease that specifically degrades the RNA of RNA-DNA hybrids. The polypeptide is Ribonuclease H (Shewanella amazonensis (strain ATCC BAA-1098 / SB2B)).